We begin with the raw amino-acid sequence, 397 residues long: MGSNLAGTQCLDSLDFVLQGGAIDDEQLRITPPEDCFDVNFDFISPPVPRTMPDFGIYEFGSEATSGSLEPGPFMPIEHAATSNPAAEKPNPGALVHVSSMQQESVEQMSALNVEIHRQLSVVSQVAKEYATTEPSLMDSTDQRNRLSSAVVSMIQGLQTFQTLLLEILGAARQGSPKEPASRASMHSSQKNDTSLQTSWTWLNTKNDLSSIADADTGDTISDFETGDRQTISRSDTNSEVRPIPESPSQTTWLDMSTSLLIISCYINLIQLCRDVFAAIRGALSVPGHQTTLLELSGFQISGVSIHEDSDLQIIVLTQVVVRLIDRIGLYLGYSGTSTAEAGKRDESDFNCKTISPQLLDFVLGQKEMEGQPSCKERIEALREEIRKLSEVVYKPI.

The disordered stretch occupies residues 220-249; sequence TISDFETGDRQTISRSDTNSEVRPIPESPS. A compositionally biased stretch (polar residues) spans 229–240; sequence RQTISRSDTNSE.

In terms of biological role, transcription factor; part of the gene cluster that mediates the biosynthesis of xenoacremones such as xenoacremone A, a compound that shows inhibitory activity toward the PI3K/AKT signaling pathway and which has the ability to induce apoptosis of A549 lung cancer cells. Acts as a positive regulator of the xenoacremones biosynthesis gene cluster. The sequence is that of Transcription factor xenB from Xenoacremonium sinensis (Endophyte fungus).